Consider the following 130-residue polypeptide: Large ribosomal subunit protein bL20 (130 aa).

The protein belongs to the bacterial ribosomal protein bL20 family.

Binds directly to 23S ribosomal RNA and is necessary for the in vitro assembly process of the 50S ribosomal subunit. It is not involved in the protein synthesizing functions of that subunit. The polypeptide is Large ribosomal subunit protein bL20 (Clavibacter michiganensis subsp. michiganensis (strain NCPPB 382)).